We begin with the raw amino-acid sequence, 750 residues long: Iron-sulfur clusters transporter ATM1, mitochondrial (750 aa).

Residues 1-16 (MFIRNVKLIKPSPVRF) constitute a mitochondrion transit peptide. At 17 to 124 (ISPIPFSFPI…PKNNLNFKIR (108 aa)) the chain is on the mitochondrial matrix side. Composition is skewed to low complexity over residues 43-75 (TSNF…KTLS) and 87-100 (DNDT…SSEN). Positions 43–100 (TSNFKSTSSSSSLKSTSTSTSTSTSKTTPKTLSKPPPKVKPPIQDNDTTSSGSSSSEN) are disordered. A helical transmembrane segment spans residues 125–146 (VIIALSLLVGAKILNVQVPFYF). Residues 125–415 (VIIALSLLVG…LGSVYRELKQ (291 aa)) enclose the ABC transmembrane type-1 domain. Over 147–169 (KQIIDTMNIDWTNEVGVFSTVIG) the chain is Mitochondrial intermembrane. A helical membrane pass occupies residues 170-193 (SLILAYGGARFGAVLFGELRNAIF). Residues 194–242 (ASVAQSAIRRVAYNTFVKLLNMDLQFHLSRQTGGLTRAIDRGTKGISYV) lie on the Mitochondrial matrix side of the membrane. A helical transmembrane segment spans residues 243 to 266 (LSAMVFHIIPITLEISIVCGILTY). A topological domain (mitochondrial intermembrane) is located at residue asparagine 267. A helical membrane pass occupies residues 268–288 (YGASFAAMTFVTMLAYSIFTI). The Mitochondrial matrix segment spans residues 289–354 (QTTAWRTKFR…SSVKIATSLA (66 aa)). Glutathione contacts are provided by residues 294 to 298 (RTKFR) and 357 to 360 (NSGQ). The helical transmembrane segment at 355–373 (FLNSGQNFIFTSALTAMMY) threads the bilayer. The Mitochondrial intermembrane segment spans residues 374 to 388 (MGCQGVYTGELTVGD). A helical transmembrane segment spans residues 389-410 (LVLINQLVFQLSVPLNFLGSVY). Glycine 407 serves as a coordination point for glutathione. Residues 411 to 750 (RELKQSLLDM…LFNSQTFEKK (340 aa)) are Mitochondrial matrix-facing. The segment at 437–462 (PNAPPLKLNNNNNNNNNNNNNNNNSL) is disordered. A compositionally biased stretch (low complexity) spans 445 to 460 (NNNNNNNNNNNNNNNN). Residues 466–702 (IRFENVSFGY…QPNSLYAQLW (237 aa)) form the ABC transporter domain. ATP contacts are provided by residues tyrosine 475 and 499-510 (GPSGSGKSTILR).

Belongs to the ABC transporter superfamily. ABCB family. Heavy Metal importer (TC 3.A.1.210) subfamily. As to quaternary structure, homodimer.

The protein resides in the mitochondrion inner membrane. Performs an essential function in the generation of cytoplasmic iron-sulfur proteins by mediating the ATP-dependent export of Fe/S cluster precursors synthesized by NFS1 and other mitochondrial proteins. Hydrolyzes ATP. Binds glutathione and may function by transporting a glutathione-conjugated iron-sulfur compound. The chain is Iron-sulfur clusters transporter ATM1, mitochondrial from Candida albicans (strain SC5314 / ATCC MYA-2876) (Yeast).